Reading from the N-terminus, the 310-residue chain is ADP-L-glycero-D-manno-heptose-6-epimerase (310 aa).

NADP(+) contacts are provided by residues 10-11 (FI), 31-32 (DN), K38, K53, 75-79 (EGACS), and N92. Catalysis depends on Y140, which acts as the Proton acceptor. K144 contacts NADP(+). Substrate is bound at residue N169. NADP(+) contacts are provided by V170 and K178. Catalysis depends on K178, which acts as the Proton acceptor. Substrate is bound by residues S180, H187, 201 to 204 (FEGS), R209, and Y272.

Belongs to the NAD(P)-dependent epimerase/dehydratase family. HldD subfamily. As to quaternary structure, homopentamer. NADP(+) serves as cofactor.

The enzyme catalyses ADP-D-glycero-beta-D-manno-heptose = ADP-L-glycero-beta-D-manno-heptose. The protein operates within nucleotide-sugar biosynthesis; ADP-L-glycero-beta-D-manno-heptose biosynthesis; ADP-L-glycero-beta-D-manno-heptose from D-glycero-beta-D-manno-heptose 7-phosphate: step 4/4. Functionally, catalyzes the interconversion between ADP-D-glycero-beta-D-manno-heptose and ADP-L-glycero-beta-D-manno-heptose via an epimerization at carbon 6 of the heptose. In Salmonella heidelberg (strain SL476), this protein is ADP-L-glycero-D-manno-heptose-6-epimerase.